We begin with the raw amino-acid sequence, 291 residues long: Mitochondrial thiamine pyrophosphate carrier 1 (291 aa).

6 helical membrane passes run 12 to 31 (GATA…GAVA), 83 to 99 (IMYI…YSMF), 120 to 141 (SLIV…FDLL), 167 to 191 (GGLA…GLMF), 214 to 230 (FCGF…TFPL), and 265 to 282 (GFGI…VSLF). Solcar repeat units lie at residues 15–102 (ASVY…FSKA), 115–200 (RPSN…AREV), and 207–290 (NIPF…VLNG).

The protein belongs to the mitochondrial carrier (TC 2.A.29) family.

It is found in the mitochondrion inner membrane. In terms of biological role, mitochondrial transporter that mediates uptake of thiamine pyrophosphate (ThPP) into mitochondria. This chain is Mitochondrial thiamine pyrophosphate carrier 1 (TPC1), found in Meyerozyma guilliermondii (strain ATCC 6260 / CBS 566 / DSM 6381 / JCM 1539 / NBRC 10279 / NRRL Y-324) (Yeast).